The chain runs to 213 residues: Validoxylamine A 7'-phosphate phosphatase (213 aa).

The active-site Nucleophile is Asp-8. A divalent metal cation contacts are provided by Asp-8 and Asp-10. Substrate-binding positions include Asp-8–Asp-10, Thr-107–Ser-108, and Lys-140. Residue Asp-10 is the Proton donor of the active site. Asp-165 is a binding site for a divalent metal cation.

Belongs to the HAD-like hydrolase superfamily. CbbY/CbbZ/Gph/YieH family. The cofactor is Mg(2+). Mn(2+) is required as a cofactor. It depends on Co(2+) as a cofactor.

The catalysed reaction is validoxylamine A 7'-phosphate + H2O = validoxylamine A + phosphate. In terms of biological role, involved in the biosynthesis of the antifungal agent validamycin A. Catalyzes the dephosphorylation of validoxylamine A 7'-phosphate to yield validoxylamine A. VldH is also able to convert trehalose 6-phosphate to trehalose. In Streptomyces hygroscopicus subsp. limoneus, this protein is Validoxylamine A 7'-phosphate phosphatase.